An 840-amino-acid chain; its full sequence is Recyclin-1 (840 aa).

The region spanning 1–48 is the F-box domain; that stretch reads MDDLLKVPEIVTNIASYLSTVDYLSFQQVNKRVYAIINGKNDSKYWSL. Serine 409 carries the post-translational modification Phosphoserine.

As to quaternary structure, interacts with SKP1.

The protein localises to the cytoplasm. The protein resides in the bud neck. It localises to the cell tip. Its function is as follows. Involved in recycling plasma membrane proteins internalized by endocytosis. Required for recycling of the v-SNARE SNC1. In Saccharomyces cerevisiae (strain ATCC 204508 / S288c) (Baker's yeast), this protein is Recyclin-1 (RCY1).